The sequence spans 544 residues: Cytochrome P450 monooxygenase cle2 (544 aa).

Residues 19-39 form a helical membrane-spanning segment; the sequence is LGLLIGLSLILSITWTAYTIL. The tract at residues 273–305 is disordered; that stretch reads RTQQVEQSIEKNTKNEKKEDEDEDQNEDEETPG. Basic and acidic residues predominate over residues 280 to 290; sequence SIEKNTKNEKK. A compositionally biased stretch (acidic residues) spans 291–304; it reads EDEDEDQNEDEETP. Residue Cys-478 participates in heme binding.

The protein belongs to the cytochrome P450 family. Heme serves as cofactor.

The protein resides in the membrane. It functions in the pathway secondary metabolite biosynthesis; terpenoid biosynthesis. In terms of biological role, cytochrome P450 monooxygenase; part of the cluster A that mediates the biosynthesis of chevalone E and its oxidized derivatives that possess a unique five-membered lactone ring and can synergistically enhance the cytotoxicity of doxorubicin (DOX) in breast cancer cells. Within the pathway, cle2 is involved in hydroxylation of the chavalone E scaffold at position C-20 and contributes with cle4 to the production of seven oxidation derivatives. The molecular scaffold is commonly biosynthesized by a series of enzymes including the non-reducing polyketide synthase (NR-PKS) cle1 that produces the alpha-pyrone triacetic acid lactone (TAL); The membrane-bound prenyltransferase cle5 that accepts TAL as its substrate to perform a C-3 geranylgeranylation reaction, in which the pathway-dedicated GGPS cle6 is required to provide GGPP, the other substrate of cle5; the FAD-dependent monooxygenase Cle3 that forms an (S)-epoxide ring at the terminal olefin of the geranylgeranyl group; and the terpene cyclase Cle7 that catalyzes the cyclization of the prenyl group that yields the pentacyclic pathway intermediate chevalone E. Chevalone E can derivatize into seven new oxidized analogs by the cytochrome P450 monooxygenases cle2 (acting at C-20) and cle4 (acting at C-11 and C-12). The chain is Cytochrome P450 monooxygenase cle2 from Aspergillus versicolor.